The sequence spans 452 residues: uncharacterized protein (452 aa).

This is an uncharacterized protein from Chlamydia pneumoniae (Chlamydophila pneumoniae).